The following is a 297-amino-acid chain: Dehydrodolichyl diphosphate synthase complex subunit Nus1 (297 aa).

The next 2 membrane-spanning stretches (helical) occupy residues 7–26 (LVWRVLHALLCLHLTLTSWL) and 40–56 (CCRAASAAVLAPLGFTL). The segment covering 63-73 (GRNRRHHRHPH) has biased composition (basic residues). The interval 63–86 (GRNRRHHRHPHGGPGPGPGPAATH) is disordered. A helical transmembrane segment spans residues 121 to 139 (IASLVVWCMAVGISYISVY). 2 N-linked (GlcNAc...) asparagine glycosylation sites follow: Asn148 and Asn275. The RXG motif; crucial for prenyltransferase activity motif lies at 294–296 (RLG). 2 residues coordinate isopentenyl diphosphate: Leu295 and Gly296.

The protein belongs to the UPP synthase family. The active dehydrodolichyl diphosphate synthase complex is a heterotetramer composed of a dimer of heterodimer of DHDDS and NUS1. Interacts with NPC2. Mg(2+) is required as a cofactor. As to expression, highly expressed in heart, liver, kidney and pancreas.

The protein resides in the endoplasmic reticulum membrane. The catalysed reaction is n isopentenyl diphosphate + (2E,6E)-farnesyl diphosphate = a di-trans,poly-cis-polyprenyl diphosphate + n diphosphate. Its pathway is protein modification; protein glycosylation. It functions in the pathway lipid metabolism. Functionally, with DHDDS, forms the dehydrodolichyl diphosphate synthase (DDS) complex, an essential component of the dolichol monophosphate (Dol-P) biosynthetic machinery. Both subunits contribute to enzymatic activity, i.e. condensation of multiple copies of isopentenyl pyrophosphate (IPP) to farnesyl pyrophosphate (FPP) to produce dehydrodolichyl diphosphate (Dedol-PP), a precursor of dolichol phosphate which is utilized as a sugar carrier in protein glycosylation in the endoplasmic reticulum (ER). Synthesizes long-chain polyprenols, mostly of C95 and C100 chain length. Regulates the glycosylation and stability of nascent NPC2, thereby promoting trafficking of LDL-derived cholesterol. Acts as a specific receptor for the N-terminus of Nogo-B, a neural and cardiovascular regulator. The sequence is that of Dehydrodolichyl diphosphate synthase complex subunit Nus1 from Mus musculus (Mouse).